We begin with the raw amino-acid sequence, 264 residues long: Carbonic anhydrase 7 (264 aa).

The region spanning 5-262 (HGWGYGQDDG…LKGRVVKASF (258 aa)) is the Alpha-carbonic anhydrase domain. Residue histidine 66 is the Proton donor/acceptor of the active site. The Zn(2+) site is built by histidine 96, histidine 98, and histidine 121. 201–202 (TT) provides a ligand contact to substrate.

This sequence belongs to the alpha-carbonic anhydrase family. Requires Zn(2+) as cofactor.

It is found in the cytoplasm. It catalyses the reaction hydrogencarbonate + H(+) = CO2 + H2O. With respect to regulation, activated by histamine, L-adrenaline, L- and D-histidine, and L- and D-phenylalanine. Inhibited by coumarins, sulfonamide derivatives such as acetazolamide (AZA), by saccharin and Foscarnet (phosphonoformate trisodium salt). Its function is as follows. Reversible hydration of carbon dioxide. The sequence is that of Carbonic anhydrase 7 (CA7) from Homo sapiens (Human).